The following is a 70-amino-acid chain: Conotoxin AbVIC (70 aa).

The N-terminal stretch at 1 to 17 (VLIIAVLFLTACQLTTA) is a signal peptide. Positions 18–41 (ETSSRGKQKHRALRSTDKNSKLTR) are excised as a propeptide. Residues 19–41 (TSSRGKQKHRALRSTDKNSKLTR) form a disordered region. 3 disulfide bridges follow: Cys43-Cys57, Cys50-Cys61, and Cys56-Cys68.

Belongs to the conotoxin O1 superfamily. As to expression, expressed by the venom duct.

The protein resides in the secreted. The chain is Conotoxin AbVIC from Conus abbreviatus (Abbreviated cone).